The sequence spans 618 residues: Sodium/iodide cotransporter (618 aa).

Topologically, residues 1-14 (MEGAEAGARATFGA) are extracellular. A helical membrane pass occupies residues 15-31 (WDYGVFATMLLVSTGIG). At 32–56 (LWVGLARGGQRSADDFFTGGRQLAA) the chain is on the cytoplasmic side. The chain crosses the membrane as a discontinuously helical span at residues 57-80 (VPVGLSLAASFMSAVQVLGVPAEA). Positions 69, 71, and 72 each coordinate Na(+). V76 contacts iodide. Over 81–84 (ARYG) the chain is Extracellular. Residues 85–105 (LKFLWMCAGQLLNSLLTAFLF) form a helical membrane-spanning segment. M90 lines the iodide pocket. The Cytoplasmic portion of the chain corresponds to 106–130 (LPIFYRLGLTSTYQYLELRFSRAVR). Residues 131 to 157 (LCGTLQYLVATMLYTGIVIYAPALILN) form a helical membrane-spanning segment. Y144 contributes to the Na(+) binding site. At 158–163 (QVTGLD) the chain is on the extracellular side. The helical transmembrane segment at 164–181 (IWASLLSTGIICTLYTTV) threads the bilayer. Topologically, residues 182 to 189 (GGMKAVVW) are cytoplasmic. Residues 190–208 (TDVFQVVVMLVGFWVILAR) form a helical membrane-spanning segment. At 209–243 (GVILLGGPRNVLSLAQNHSRINLMDFDPDPRSRYT) the chain is on the extracellular side. Residues 244–266 (FWTFIVGGTLVWLSMYGVNQAQV) form a discontinuously helical membrane-spanning segment. W255 provides a ligand contact to iodide. Position 258 (M258) interacts with Na(+). Residues 267–278 (QRYVACHTEGKA) are Cytoplasmic-facing. A helical transmembrane segment spans residues 279-301 (KLALLVNQLGLFLIVASAACCGI). Topologically, residues 302-335 (VMFVYYKDCDPLLTGRISAPDQYMPLLVLDIFED) are extracellular. The chain crosses the membrane as a helical span at residues 336-363 (LPGVPGLFLACAYSGTLSTASTSINAMA). The Cytoplasmic segment spans residues 364 to 386 (AVTVEDLIKPRMPGLAPRKLVFI). The helical transmembrane segment at 387–408 (SKGLSFIYGSACLTVAALSSLL) threads the bilayer. At 409 to 411 (GGG) the chain is on the extracellular side. The helical transmembrane segment at 412-437 (VLQGSFTVMGVISGPLLGAFTLGMLL) threads the bilayer. L413 contacts iodide. 2 residues coordinate Na(+): S416 and F417. F417 contacts iodide. At 438 to 441 (PACN) the chain is on the cytoplasmic side. A helical transmembrane segment spans residues 442-465 (TPGVLSGLAAGLAVSLWVAVGATL). The Extracellular portion of the chain corresponds to 466–520 (YPPGEQTMGVLPTSAAGCTNDSVLLGPPGATNASNGIPSSGMDTGRPALADTFYA). N-linked (GlcNAc...) asparagine glycosylation is found at N485 and N497. A helical transmembrane segment spans residues 521 to 545 (ISYLYYGALGTLTTMLCGALISYLT). At 546-618 (GPTKRSSLGP…YLGHDVETNL (73 aa)) the chain is on the cytoplasmic side. S551 carries the phosphoserine; by PKA modification. Residues 587–618 (EDIPAVTKKPPGLKPGAETHPLYLGHDVETNL) are disordered.

Belongs to the sodium:solute symporter (SSF) (TC 2.A.21) family. As to quaternary structure, monomer.

The protein localises to the cell membrane. The protein resides in the cytoplasm. It catalyses the reaction iodide(out) + 2 Na(+)(out) = iodide(in) + 2 Na(+)(in). The enzyme catalyses chlorate(out) + 2 Na(+)(out) = chlorate(in) + 2 Na(+)(in). It carries out the reaction thiocyanate(out) + 2 Na(+)(out) = thiocyanate(in) + 2 Na(+)(in). The catalysed reaction is nitrate(out) + 2 Na(+)(out) = nitrate(in) + 2 Na(+)(in). It catalyses the reaction selenocyanate(out) + 2 Na(+)(out) = selenocyanate(in) + 2 Na(+)(in). With respect to regulation, perchlorate inhibits iodide transport activity. Oxyanions inhibit iodide transport activity by blocking the binding sites for iodide and one of the sodium ions. In terms of biological role, sodium:iodide symporter that mediates the transport of iodide into the thyroid gland. Can also mediate the transport of chlorate, thiocynate, nitrate and selenocynate. The sequence is that of Sodium/iodide cotransporter (Slc5a5) from Rattus norvegicus (Rat).